The chain runs to 371 residues: Protein SPATA31F3 (371 aa).

The chain crosses the membrane as a helical span at residues 7–29 (ILWDVGSSVYTYGSLFIIALIIW). Residues 62-86 (LRVKKRTTKEETEKLQKLLSNMKRQ) adopt a coiled-coil conformation. Composition is skewed to polar residues over residues 189–203 (LSKV…LSSQ) and 244–266 (PQQQ…SSSS). Disordered regions lie at residues 189–222 (LSKV…STDQ), 240–299 (YHPA…EAEM), and 326–371 (YKSE…KRNI). A phosphoserine mark is found at serine 197 and serine 198. Over residues 277–287 (QKKRKKTKKLV) the composition is skewed to basic residues. Residues 330 to 362 (TGAKPKTGEPKKSSAKVRAEEPNLEKHAKDLKA) show a composition bias toward basic and acidic residues.

Belongs to the SPATA31 family.

The protein resides in the membrane. The sequence is that of Protein SPATA31F3 (Spata31f3) from Mus musculus (Mouse).